The following is a 318-amino-acid chain: HPr kinase/phosphorylase (318 aa).

Catalysis depends on residues His143 and Lys164. 158-165 (GKSGVGKS) lines the ATP pocket. Ser165 serves as a coordination point for Mg(2+). The active-site Proton acceptor; for phosphorylation activity. Proton donor; for dephosphorylation activity is the Asp182. Positions 206–215 (MEIRGLGILN) are important for the catalytic mechanism of both phosphorylation and dephosphorylation. Residue Glu207 participates in Mg(2+) binding. The active site involves Arg248. The important for the catalytic mechanism of dephosphorylation stretch occupies residues 269–274 (PVKPGR).

This sequence belongs to the HPrK/P family. Homohexamer. The cofactor is Mg(2+).

The enzyme catalyses [HPr protein]-L-serine + ATP = [HPr protein]-O-phospho-L-serine + ADP + H(+). It carries out the reaction [HPr protein]-O-phospho-L-serine + phosphate + H(+) = [HPr protein]-L-serine + diphosphate. Catalyzes the ATP- as well as the pyrophosphate-dependent phosphorylation of a specific serine residue in HPr, a phosphocarrier protein of the phosphoenolpyruvate-dependent sugar phosphotransferase system (PTS). HprK/P also catalyzes the pyrophosphate-producing, inorganic phosphate-dependent dephosphorylation (phosphorolysis) of seryl-phosphorylated HPr (P-Ser-HPr). The sequence is that of HPr kinase/phosphorylase from Leptospira borgpetersenii serovar Hardjo-bovis (strain L550).